The primary structure comprises 323 residues: tRNA-dihydrouridine(20/20a) synthase (323 aa).

Residues 14–16 (PML) and Gln-66 contribute to the FMN site. Cys-96 (proton donor) is an active-site residue. FMN-binding positions include Lys-135, His-166, 206-208 (NGG), and 228-229 (GR).

Belongs to the Dus family. DusA subfamily. FMN is required as a cofactor.

It carries out the reaction 5,6-dihydrouridine(20) in tRNA + NADP(+) = uridine(20) in tRNA + NADPH + H(+). The enzyme catalyses 5,6-dihydrouridine(20) in tRNA + NAD(+) = uridine(20) in tRNA + NADH + H(+). It catalyses the reaction 5,6-dihydrouridine(20a) in tRNA + NADP(+) = uridine(20a) in tRNA + NADPH + H(+). The catalysed reaction is 5,6-dihydrouridine(20a) in tRNA + NAD(+) = uridine(20a) in tRNA + NADH + H(+). Its function is as follows. Catalyzes the synthesis of 5,6-dihydrouridine (D), a modified base found in the D-loop of most tRNAs, via the reduction of the C5-C6 double bond in target uridines. Specifically modifies U20 and U20a in tRNAs. The chain is tRNA-dihydrouridine(20/20a) synthase from Haemophilus ducreyi (strain 35000HP / ATCC 700724).